We begin with the raw amino-acid sequence, 62 residues long: Phycobilisome degradation protein NblA homolog 1 (62 aa).

To Synechococcus PCC 7942 NblA and some, to chloroplast ycf18.

This Synechocystis sp. (strain ATCC 27184 / PCC 6803 / Kazusa) protein is Phycobilisome degradation protein NblA homolog 1.